Consider the following 131-residue polypeptide: 1,4-dihydroxy-2-naphthoyl-CoA hydrolase (131 aa).

The active site involves aspartate 7.

This sequence belongs to the 4-hydroxybenzoyl-CoA thioesterase family. DHNA-CoA hydrolase subfamily.

It catalyses the reaction 1,4-dihydroxy-2-naphthoyl-CoA + H2O = 1,4-dihydroxy-2-naphthoate + CoA + H(+). The protein operates within cofactor biosynthesis; phylloquinone biosynthesis. It functions in the pathway quinol/quinone metabolism; 1,4-dihydroxy-2-naphthoate biosynthesis; 1,4-dihydroxy-2-naphthoate from chorismate: step 7/7. Its function is as follows. Catalyzes the hydrolysis of 1,4-dihydroxy-2-naphthoyl-CoA (DHNA-CoA) to 1,4-dihydroxy-2-naphthoate (DHNA), a reaction involved in phylloquinone (vitamin K1) biosynthesis. This is 1,4-dihydroxy-2-naphthoyl-CoA hydrolase from Synechococcus sp. (strain RCC307).